The chain runs to 91 residues: Large ribosomal subunit protein bL27 (91 aa).

A disordered region spans residues 1–26 (MAHKKGVGSSRNGRDSNPKMRGVKRF).

It belongs to the bacterial ribosomal protein bL27 family.

In Chloroflexus aurantiacus (strain ATCC 29366 / DSM 635 / J-10-fl), this protein is Large ribosomal subunit protein bL27.